The sequence spans 615 residues: Dihydroxy-acid dehydratase (615 aa).

Aspartate 81 is a Mg(2+) binding site. Cysteine 122 lines the [2Fe-2S] cluster pocket. Aspartate 123 and lysine 124 together coordinate Mg(2+). Lysine 124 is modified (N6-carboxylysine). Cysteine 195 provides a ligand contact to [2Fe-2S] cluster. Position 491 (glutamate 491) interacts with Mg(2+). The Proton acceptor role is filled by serine 517.

Belongs to the IlvD/Edd family. In terms of assembly, homodimer. It depends on [2Fe-2S] cluster as a cofactor. The cofactor is Mg(2+).

It catalyses the reaction (2R)-2,3-dihydroxy-3-methylbutanoate = 3-methyl-2-oxobutanoate + H2O. The catalysed reaction is (2R,3R)-2,3-dihydroxy-3-methylpentanoate = (S)-3-methyl-2-oxopentanoate + H2O. It functions in the pathway amino-acid biosynthesis; L-isoleucine biosynthesis; L-isoleucine from 2-oxobutanoate: step 3/4. The protein operates within amino-acid biosynthesis; L-valine biosynthesis; L-valine from pyruvate: step 3/4. In terms of biological role, functions in the biosynthesis of branched-chain amino acids. Catalyzes the dehydration of (2R,3R)-2,3-dihydroxy-3-methylpentanoate (2,3-dihydroxy-3-methylvalerate) into 2-oxo-3-methylpentanoate (2-oxo-3-methylvalerate) and of (2R)-2,3-dihydroxy-3-methylbutanoate (2,3-dihydroxyisovalerate) into 2-oxo-3-methylbutanoate (2-oxoisovalerate), the penultimate precursor to L-isoleucine and L-valine, respectively. This Shewanella piezotolerans (strain WP3 / JCM 13877) protein is Dihydroxy-acid dehydratase.